A 67-amino-acid polypeptide reads, in one-letter code: Large ribosomal subunit protein uL30 (67 aa).

Belongs to the universal ribosomal protein uL30 family. Part of the 50S ribosomal subunit.

In Hamiltonella defensa subsp. Acyrthosiphon pisum (strain 5AT), this protein is Large ribosomal subunit protein uL30.